Reading from the N-terminus, the 255-residue chain is 14-3-3-like protein GF14 psi (255 aa).

The residue at position 66 (Ser-66) is a Phosphoserine. Thr-162 is subject to Phosphothreonine. Ser-189 is subject to Phosphoserine. 2 positions are modified to phosphothreonine: Thr-210 and Thr-238.

Belongs to the 14-3-3 family. Component of a DNA binding complex that binds to the G box. Interacts with IDH3, AGT3, GLN1-1, GLN1-2, GLN1-4, SAM1, SAM2, MDH1, METK3 and MDH2. Binds to 1-aminocyclopropane-1-carboxylate synthases (ACS) such as ACS2, ACS5, ACS6, ACS8, and ACS11. Interacts with FD. Interacts with DREB1A and DREB1B in the nucleus. Interacts with CINV1.

It localises to the cytoplasm. It is found in the nucleus. In terms of biological role, is associated with a DNA binding complex that binds to the G box, a well-characterized cis-acting DNA regulatory element found in plant genes. Involved in the regulation of nutrient metabolism. Reciprocal negative transcription regulation of miR396. Negative regulator of constitutive freezing tolerance and cold acclimation by controlling cold-induced gene expression partially through an ethylene (ET)-dependent pathway; prevents ethylene (ET) biosynthesis, probably by binding 1-aminocyclopropane-1-carboxylate synthases (ACS) to reduce their stability, thus contributing to establish adequate ET levels under both standard and low-temperature conditions. The polypeptide is 14-3-3-like protein GF14 psi (Arabidopsis thaliana (Mouse-ear cress)).